A 593-amino-acid chain; its full sequence is Arginine--tRNA ligase (593 aa).

The 'HIGH' region signature appears at 138 to 148 (ANPTGPLHVGH).

Belongs to the class-I aminoacyl-tRNA synthetase family. Monomer.

Its subcellular location is the cytoplasm. It carries out the reaction tRNA(Arg) + L-arginine + ATP = L-arginyl-tRNA(Arg) + AMP + diphosphate. The chain is Arginine--tRNA ligase from Burkholderia vietnamiensis (strain G4 / LMG 22486) (Burkholderia cepacia (strain R1808)).